A 180-amino-acid chain; its full sequence is Dual-action ribosomal maturation protein DarP (180 aa).

It belongs to the DarP family.

Its subcellular location is the cytoplasm. In terms of biological role, member of a network of 50S ribosomal subunit biogenesis factors which assembles along the 30S-50S interface, preventing incorrect 23S rRNA structures from forming. Promotes peptidyl transferase center (PTC) maturation. This Pasteurella multocida (strain Pm70) protein is Dual-action ribosomal maturation protein DarP.